Reading from the N-terminus, the 339-residue chain is Anthranilate phosphoribosyltransferase (339 aa).

Residues G79, 82-83, T87, 89-92, 107-115, and S119 each bind 5-phospho-alpha-D-ribose 1-diphosphate; these read GD, NVST, and KHGNRAVSS. G79 contributes to the anthranilate binding site. S91 lines the Mg(2+) pocket. N110 contacts anthranilate. Residue R165 participates in anthranilate binding. D224 and E225 together coordinate Mg(2+).

Belongs to the anthranilate phosphoribosyltransferase family. Homodimer. Mg(2+) is required as a cofactor.

The catalysed reaction is N-(5-phospho-beta-D-ribosyl)anthranilate + diphosphate = 5-phospho-alpha-D-ribose 1-diphosphate + anthranilate. Its pathway is amino-acid biosynthesis; L-tryptophan biosynthesis; L-tryptophan from chorismate: step 2/5. Catalyzes the transfer of the phosphoribosyl group of 5-phosphorylribose-1-pyrophosphate (PRPP) to anthranilate to yield N-(5'-phosphoribosyl)-anthranilate (PRA). This is Anthranilate phosphoribosyltransferase from Geobacillus kaustophilus (strain HTA426).